We begin with the raw amino-acid sequence, 257 residues long: Gasdermin-like protein rcd-1-1 (257 aa).

Belongs to the gasdermin family. In terms of assembly, heterooligomer; the heterooligomer with rcd-1-2 forms a ring-shaped pore complex when inserted in the membrane.

Its subcellular location is the cytoplasm. The protein localises to the cell membrane. Its function is as follows. Gasdermin-like protein involved in heterokaryon incompatibility, a process that ensures that during spontaneous vegetative cell fusion, only compatible cells from the same colony survive (non-self-recognition). In N.crassa, the rcd-1 locus exists as 2 incompatible alleles, rcd-1-1 (this entry) and rcd-1-2 (AC P0DW10). During the allorecognition process, forms a heterooligomer with rcd-1-2, thereby forming a functional gasdermin-like complex that binds to membranes and forms pores, triggering cell death. Binds negatively charged phospholipids, such as cardiolipin and phosphatidylserine. Also binds to phosphoinositides, preferentially to phosphatidylinositol-3-phosphate (PtdIns-3-P), PtdIns-5-P and PtdIns-3,5-P2. This Neurospora crassa (strain ATCC 24698 / 74-OR23-1A / CBS 708.71 / DSM 1257 / FGSC 987) protein is Gasdermin-like protein rcd-1-1.